Here is a 165-residue protein sequence, read N- to C-terminus: Transcription factor zip-10 (165 aa).

Residues 53 to 71 (ASLGTSTTSSSRCSSTESS) are compositionally biased toward low complexity. The tract at residues 53-99 (ASLGTSTTSSSRCSSTESSAAPGKIRRGRPQQEIADGQDAHSQKKRH) is disordered. The stretch at 104–150 (ARQYRAQMRQKVENVKSLHDEKEQLELEVKALRQAVSGLQQENAQKD) forms a coiled coil.

The protein resides in the nucleus. Its function is as follows. Transcription factor that regulates the expression of genes in response to changes in temperature. In particular, binds to the promoter region of genes such as asp-17 in response to severe cold to warm temperature transitions to promote gene expression. Promotes stress-induced death, particularly in older animals, following cold shock followed by warming and this may have evolved as a form of kin survival under thermal stress conditions, favoring the survival of younger animals. The chain is Transcription factor zip-10 from Caenorhabditis elegans.